The following is a 253-amino-acid chain: Nurim homolog (253 aa).

At 1-2 the chain is on the nuclear side; sequence MT. The chain crosses the membrane as a helical span at residues 3–30; sequence SIAKSIVLLASLATFAYSLYVVGSLMMF. The Perinuclear space segment spans residues 31 to 56; that stretch reads LSTPRSISKAHTWIFNLLDNKSRLQT. A helical transmembrane segment spans residues 57-78; the sequence is AYGPVVFDTLYLIGFIFQHSFL. Topologically, residues 79–96 are nuclear; that stretch reads KSAVVKKLLAKLGLSGAE. A helical transmembrane segment spans residues 97 to 113; it reads RTIYSLTSSLCLHYLIV. The Perinuclear space portion of the chain corresponds to 114–132; sequence NWLPAQSIVLWQIDVEQSA. A helical transmembrane segment spans residues 133–161; that stretch reads PLWWTFVITHGICWVVIFGGSLVMDLPEL. The Nuclear segment spans residues 162–188; the sequence is LGVKQAYYDLKAYGPPISYKSGELRNL. Residues 189-207 traverse the membrane as a helical segment; that stretch reads YAHVRHPSFVGLSVILFAT. At 208-213 the chain is on the perinuclear space side; it reads NVMSVD. A helical membrane pass occupies residues 214 to 231; the sequence is RLVMALLLTTYMYLAWST. The Nuclear portion of the chain corresponds to 232 to 253; sequence DQKDVAYQKIQLQRKKLELKAK.

Belongs to the nurim family.

Its subcellular location is the nucleus inner membrane. The chain is Nurim homolog (nrm) from Drosophila melanogaster (Fruit fly).